A 175-amino-acid chain; its full sequence is Austinoid biosynthesis cluster protein F (175 aa).

The protein belongs to the trt14 isomerase family. As to quaternary structure, homodimer.

It participates in secondary metabolite biosynthesis; terpenoid biosynthesis. Its function is as follows. Part of the gene cluster that mediates the biosynthesis of calidodehydroaustin, a fungal meroterpenoid. The first step of the pathway is the synthesis of 3,5-dimethylorsellinic acid by the polyketide synthase ausA. 3,5-dimethylorsellinic acid is then prenylated by the polyprenyl transferase ausN. Further epoxidation by the FAD-dependent monooxygenase ausM and cyclization by the probable terpene cyclase ausL lead to the formation of protoaustinoid A. Protoaustinoid A is then oxidized to spiro-lactone preaustinoid A3 by the combined action of the FAD-binding monooxygenases ausB and ausC, and the dioxygenase ausE. Acid-catalyzed keto-rearrangement and ring contraction of the tetraketide portion of preaustinoid A3 by ausJ lead to the formation of preaustinoid A4. The aldo-keto reductase ausK, with the help of ausH, is involved in the next step by transforming preaustinoid A4 into isoaustinone which is in turn hydroxylated by the P450 monooxygenase ausI to form austinolide. The cytochrome P450 monooxygenase ausG modifies austinolide to austinol. Austinol is further acetylated to austin by the O-acetyltransferase ausP, which spontaneously changes to dehydroaustin. The cytochrome P450 monooxygenase ausR then converts dehydroaustin is into 7-dehydrodehydroaustin. The hydroxylation catalyzed by ausR permits the O-acetyltransferase ausQ to add an additional acetyl group to the molecule, leading to the formation of acetoxydehydroaustin. The short chain dehydrogenase ausT catalyzes the reduction of the double bond present between carbon atoms 1 and 2 to convert 7-dehydrodehydroaustin into 1,2-dihydro-7-hydroxydehydroaustin. AusQ catalyzes not only an acetylation reaction but also the addition of the PKS ausV diketide product to 1,2-dihydro-7-hydroxydehydroaustin, forming precalidodehydroaustin. Finally, the iron/alpha-ketoglutarate-dependent dioxygenase converts precalidodehydroaustin into calidodehydroaustin. The protein is Austinoid biosynthesis cluster protein F of Aspergillus calidoustus.